We begin with the raw amino-acid sequence, 678 residues long: DNA ligase (678 aa).

Residues Asp36–Asp40, Ser85–Leu86, and Glu117 contribute to the NAD(+) site. Residue Lys119 is the N6-AMP-lysine intermediate of the active site. Residues Arg140, Glu177, Lys294, and Lys318 each contribute to the NAD(+) site. Positions 412, 415, 430, and 435 each coordinate Zn(2+). One can recognise a BRCT domain in the interval Ile598 to Glu678.

The protein belongs to the NAD-dependent DNA ligase family. LigA subfamily. Requires Mg(2+) as cofactor. It depends on Mn(2+) as a cofactor.

The enzyme catalyses NAD(+) + (deoxyribonucleotide)n-3'-hydroxyl + 5'-phospho-(deoxyribonucleotide)m = (deoxyribonucleotide)n+m + AMP + beta-nicotinamide D-nucleotide.. Functionally, DNA ligase that catalyzes the formation of phosphodiester linkages between 5'-phosphoryl and 3'-hydroxyl groups in double-stranded DNA using NAD as a coenzyme and as the energy source for the reaction. It is essential for DNA replication and repair of damaged DNA. The chain is DNA ligase from Gloeothece citriformis (strain PCC 7424) (Cyanothece sp. (strain PCC 7424)).